The sequence spans 471 residues: 6-phosphofructo-2-kinase/fructose-2,6-bisphosphatase 1 (471 aa).

Ser-2 carries the post-translational modification N-acetylserine. Positions 2–250 (SREMGELTQT…AYYLMNIHVT (249 aa)) are 6-phosphofructo-2-kinase. Ser-33 carries the phosphoserine; by PKA modification. An ATP-binding site is contributed by 49-57 (GLPARGKTY). Beta-D-fructose 6-phosphate is bound by residues Arg-82 and Arg-105. The active site involves Asp-131. Positions 133 and 139 each coordinate beta-D-fructose 6-phosphate. Ser-141 carries the phosphoserine modification. Cys-161 is an active-site residue. ATP is bound at residue 170–175 (NIKQVK). Residues Lys-175, Arg-196, and Tyr-200 each coordinate beta-D-fructose 6-phosphate. The interval 251-471 (PRSIYLCRHG…EALDTVPAHY (221 aa)) is fructose-2,6-bisphosphatase. Arg-258 contacts beta-D-fructose 2,6-bisphosphate. His-259 (tele-phosphohistidine intermediate) is an active-site residue. The beta-D-fructose 2,6-bisphosphate site is built by Asn-265, Gly-271, and Arg-308. Glu-328 (proton donor/acceptor) is an active-site residue. The beta-D-fructose 2,6-bisphosphate site is built by Tyr-339, Arg-353, Lys-357, Tyr-368, Gln-394, and Arg-398. 350–353 (FALR) contributes to the ATP binding site. Residues 394 to 398 (QAVMR) and Tyr-430 each bind ATP.

In the C-terminal section; belongs to the phosphoglycerate mutase family. In terms of assembly, homodimer. In terms of tissue distribution, liver.

The catalysed reaction is beta-D-fructose 2,6-bisphosphate + H2O = beta-D-fructose 6-phosphate + phosphate. It catalyses the reaction beta-D-fructose 6-phosphate + ATP = beta-D-fructose 2,6-bisphosphate + ADP + H(+). Its activity is regulated as follows. Phosphorylation at Ser-33 inhibits the kinase and activates the bisphosphatase. Its function is as follows. Synthesis and degradation of fructose 2,6-bisphosphate. This chain is 6-phosphofructo-2-kinase/fructose-2,6-bisphosphatase 1, found in Rattus norvegicus (Rat).